We begin with the raw amino-acid sequence, 303 residues long: MVHIMFNQAAQELTTIRDILRFAVSRFNEAGLFFGHGTDNAHDEAAYLILHTLNLPLDMLAPYLDAKLLEAEKEEVLAVIERRAVEHIPAAYLTHQAWQGEFDFYVDERVIIPRSFIYELLGDGLRPWIEYDELVHNALDLCTGSGCLAIQMAHHYPDAQIDAVDVSLDALEVAGINVEDYGLEERIRLIHTDLFEGLEGTYDLIVSNPPYVDAESVELLPEEYLHEPELALGSGADGLDATRQILLNAAKFLNPKGVLLVEIGHNRDVLEAAYPELPFTWLETSGGDGFVFLLTREQLLGEE.

It belongs to the protein N5-glutamine methyltransferase family. PrmB subfamily.

It catalyses the reaction L-glutaminyl-[ribosomal protein uL3] + S-adenosyl-L-methionine = N(5)-methyl-L-glutaminyl-[ribosomal protein uL3] + S-adenosyl-L-homocysteine + H(+). Methylates large ribosomal subunit protein uL3 on a specific glutamine residue. This is Ribosomal protein uL3 glutamine methyltransferase from Neisseria meningitidis serogroup B (strain ATCC BAA-335 / MC58).